The sequence spans 274 residues: 2,3,4,5-tetrahydropyridine-2,6-dicarboxylate N-succinyltransferase (274 aa).

Substrate is bound by residues Arg106 and Asp143.

This sequence belongs to the transferase hexapeptide repeat family. As to quaternary structure, homotrimer.

The protein localises to the cytoplasm. The catalysed reaction is (S)-2,3,4,5-tetrahydrodipicolinate + succinyl-CoA + H2O = (S)-2-succinylamino-6-oxoheptanedioate + CoA. It participates in amino-acid biosynthesis; L-lysine biosynthesis via DAP pathway; LL-2,6-diaminopimelate from (S)-tetrahydrodipicolinate (succinylase route): step 1/3. The protein is 2,3,4,5-tetrahydropyridine-2,6-dicarboxylate N-succinyltransferase of Acidovorax ebreus (strain TPSY) (Diaphorobacter sp. (strain TPSY)).